Consider the following 234-residue polypeptide: Phosphoglycolate phosphatase (234 aa).

Catalysis depends on Asp-13, which acts as the Nucleophile. Mg(2+)-binding residues include Asp-13, Asp-15, and Asp-175.

It belongs to the HAD-like hydrolase superfamily. CbbY/CbbZ/Gph/YieH family. Monomer. Requires Mg(2+) as cofactor. Chloride serves as cofactor.

It catalyses the reaction 2-phosphoglycolate + H2O = glycolate + phosphate. The protein operates within organic acid metabolism; glycolate biosynthesis; glycolate from 2-phosphoglycolate: step 1/1. Its function is as follows. Specifically catalyzes the dephosphorylation of 2-phosphoglycolate. Is involved in the dissimilation of the intracellular 2-phosphoglycolate formed during the DNA repair of 3'-phosphoglycolate ends, a major class of DNA lesions induced by oxidative stress. This is Phosphoglycolate phosphatase from Pectobacterium atrosepticum (strain SCRI 1043 / ATCC BAA-672) (Erwinia carotovora subsp. atroseptica).